Here is a 524-residue protein sequence, read N- to C-terminus: B3 domain-containing protein Os07g0183700 (524 aa).

Disordered regions lie at residues 94-152 and 191-232; these read DGEG…TSVS and PLQP…FQTQ. Positions 100–109 are enriched in pro residues; that stretch reads CAPPPSPIPA. Composition is skewed to low complexity over residues 110–124 and 200–232; these read GPAS…SAPA and AAAA…FQTQ. Positions 336–434 form a DNA-binding region, TF-B3; the sequence is SFVKPLTYTD…EMFMAVRRTR (99 aa).

The protein localises to the nucleus. The chain is B3 domain-containing protein Os07g0183700 from Oryza sativa subsp. japonica (Rice).